Here is a 1849-residue protein sequence, read N- to C-terminus: Brefeldin A-inhibited guanine nucleotide-exchange protein 1 (1849 aa).

A DCB; DCB:DCB and DCB:HUS domain interaction region spans residues 2–224 (YEGKKTKNMF…QEAKQMEKER (223 aa)). The span at 46–58 (AETEKQSPPHGEA) shows a compositional bias: basic and acidic residues. Disordered regions lie at residues 46–65 (AETEKQSPPHGEAKAGSSTL), 216–301 (EAKQ…ADQA), and 350–413 (INVS…SPGA). Phosphoserine is present on residues Ser-52, Ser-286, Ser-289, and Ser-290. Polar residues-rich tracts occupy residues 350–360 (INVSADGNNGT) and 394–409 (SVSSNDTQESGNSSGP). 2 positions are modified to phosphoserine: Ser-397 and Ser-410. The interval 557–577 (ADAQSVVDIYVNYDCDLNAAN) is HUS; DCB:HUS domain interaction. The segment at 634–687 (PNSQTTLGQEKPSEQETSEMKHPETINRYGSLNSLESTSSSGIGSYSTQMSGTD) is disordered. Over residues 644 to 658 (KPSEQETSEMKHPET) the composition is skewed to basic and acidic residues. The segment covering 664–684 (SLNSLESTSSSGIGSYSTQMS) has biased composition (low complexity). The 132-residue stretch at 709–840 (FTKKPKRGIQ…IIMLTTDLHS (132 aa)) folds into the SEC7 domain. Residues 711–715 (KKPKR) carry the Nuclear localization signal (NLS) motif. Ser-1079, Ser-1566, and Ser-1569 each carry phosphoserine.

As to quaternary structure, homodimer. Interacts with ARFGEF2/BIG2; both proteins are probably part of the same or very similar macromolecular complexes. Interacts with FKBP2. Interacts with MYO9B. Interacts with PRKAR1A and PRKAR2A. Interacts with PPP1CC. Interacts with NCL, FBL, NUP62 and U3 small nucleolar RNA. Interacts with DPY30. Interacts with PDE3A. Interacts with KANK1. Interacts with TBC1D22A and TBC1D22B. Phosphorylated. In vitro phosphorylated by PKA reducing its GEF activity and dephosphorylated by phosphatase PP1. As to expression, abundantly expressed in kidney, somewhat less abundant in lung, spleen, and brain, and still less abundant in heart.

It localises to the cytoplasm. The protein resides in the perinuclear region. It is found in the golgi apparatus. The protein localises to the trans-Golgi network. Its subcellular location is the nucleus. It localises to the nucleolus. The protein resides in the nucleus matrix. It is found in the membrane. Inhibited by brefeldin A. Functionally, promotes guanine-nucleotide exchange on ARF1 and ARF3. Promotes the activation of ARF1/ARF3 through replacement of GDP with GTP. Involved in vesicular trafficking. Required for the maintenance of Golgi structure; the function may be independent of its GEF activity. Required for the maturation of integrin beta-1 in the Golgi. Involved in the establishment and persistence of cell polarity during directed cell movement in wound healing. Proposed to act as A kinase-anchoring protein (AKAP) and may mediate crosstalk between Arf and PKA pathways. Inhibits GAP activity of MYO9B probably through competitive RhoA binding. The function in the nucleus remains to be determined. This is Brefeldin A-inhibited guanine nucleotide-exchange protein 1 (ARFGEF1) from Bos taurus (Bovine).